Consider the following 215-residue polypeptide: Sodium channel regulatory subunit beta-2 (215 aa).

An N-terminal signal peptide occupies residues 1–29; it reads MHRDAWLPRPAFSLTGLSLFFSLVPPGRS. Topologically, residues 30 to 157 are extracellular; it reads MEVTVPATLN…MEEPPERDST (128 aa). The Ig-like C2-type domain maps to 32–154; that stretch reads VTVPATLNVL…QVLMEEPPER (123 aa). 3 N-linked (GlcNAc...) asparagine glycosylation sites follow: Asn42, Asn66, and Asn74. 2 disulfide bridges follow: Cys50–Cys127 and Cys72–Cys75. Residues 158–179 form a helical membrane-spanning segment; that stretch reads VAVIVGASVGGFLAVVILVLMV. Over 180–215 the chain is Cytoplasmic; the sequence is VKCVRRKKEQKLSTDDLKTEEEGKTDGEGNPDDGAK. Residues 187-215 are disordered; sequence KEQKLSTDDLKTEEEGKTDGEGNPDDGAK. The span at 189–215 shows a compositional bias: basic and acidic residues; it reads QKLSTDDLKTEEEGKTDGEGNPDDGAK. Ser192 is subject to Phosphoserine. Residue Thr204 is modified to Phosphothreonine.

This sequence belongs to the sodium channel auxiliary subunit SCN2B (TC 8.A.17) family. A voltage-gated sodium (Nav) channel consists of an ion-conducting pore-forming alpha subunit functional on its own that is regulated by one or more beta subunits. The beta subunit SCN2B is disulfide-linked to the pore-forming alpha subunit. Interacts with SCN1A; regulatory subunit of SCN1A/Nav1.1. Interacts with SCN2A; regulatory subunit of SCN2A/Nav1.2. Interacts with SCN3A; regulatory subunit of SCN3A/Nav1.3. Interacts with SCN5A; regulatory subunit of SCN5A/Nav1.5. Interacts with SCN8A; regulatory subunit of SCN8A/Nav1.6. Interacts with SCN9A; regulatory subunit of SCN9A/Nav1.7. Interacts with SCN10A; regulatory subunit of SCN10A/Nav1.8. Interacts with TNR; may play a crucial role in clustering and regulation of activity of SCN2B-containing Nav channels at nodes of Ranvier.

The protein localises to the cell membrane. It is found in the cell projection. The protein resides in the axon. Functionally, regulatory subunit of multiple voltage-gated sodium (Nav) channels directly mediating the depolarization of excitable membranes. Navs, also called VGSCs (voltage-gated sodium channels) or VDSCs (voltage-dependent sodium channels), operate by switching between closed and open conformations depending on the voltage difference across the membrane. In the open conformation they allow Na(+) ions to selectively pass through the pore, along their electrochemical gradient. The influx of Na+ ions provokes membrane depolarization, initiating the propagation of electrical signals throughout cells and tissues. The accessory beta subunits participate in localization and functional modulation of the Nav channels. Modulates the activity of SCN1A/Nav1.1, SCN2A/Nav1.2, SCN2A/Nav1.3, SCN5A/Nav1.5, SCN8A/Nav1.6, SCN9A/Nav1.7 and SCN10A/Nav1.8. The chain is Sodium channel regulatory subunit beta-2 from Homo sapiens (Human).